A 90-amino-acid polypeptide reads, in one-letter code: Small ribosomal subunit protein uS15 (90 aa).

The protein belongs to the universal ribosomal protein uS15 family. As to quaternary structure, part of the 30S ribosomal subunit. Forms a bridge to the 50S subunit in the 70S ribosome, contacting the 23S rRNA.

Its function is as follows. One of the primary rRNA binding proteins, it binds directly to 16S rRNA where it helps nucleate assembly of the platform of the 30S subunit by binding and bridging several RNA helices of the 16S rRNA. Forms an intersubunit bridge (bridge B4) with the 23S rRNA of the 50S subunit in the ribosome. The protein is Small ribosomal subunit protein uS15 of Herpetosiphon aurantiacus (strain ATCC 23779 / DSM 785 / 114-95).